A 209-amino-acid chain; its full sequence is MSKIKLFDLSGKVQEEIELNQKLLVSEVHKQAIFDAILAENLSQIQGTHSTLKKGEVSGGGKKPYQQKHTGRARQGSIRNPHYVGGGIAFGPKPNRNYKIKVNKKVSSLAFKSAITSKVNNNEFLGLVDSIKQDKPSTKAIAKLLKELKVNKKVLIVAFEKNENLEKSSANLPNVSYKLWNQVSVKDLIDANCVLAQKSAINNWVERLN.

Positions 50 to 78 are disordered; sequence STLKKGEVSGGGKKPYQQKHTGRARQGSI.

This sequence belongs to the universal ribosomal protein uL4 family. Part of the 50S ribosomal subunit.

One of the primary rRNA binding proteins, this protein initially binds near the 5'-end of the 23S rRNA. It is important during the early stages of 50S assembly. It makes multiple contacts with different domains of the 23S rRNA in the assembled 50S subunit and ribosome. Functionally, forms part of the polypeptide exit tunnel. In Mycoplasmoides gallisepticum (strain R(low / passage 15 / clone 2)) (Mycoplasma gallisepticum), this protein is Large ribosomal subunit protein uL4.